The following is a 133-amino-acid chain: Histone H2A (133 aa).

Gly residues predominate over residues 1 to 10; sequence MTGGKSGGKA. Residues 1 to 24 are disordered; that stretch reads MTGGKSGGKASGSKNAQSRSSKAG. K5 and K9 each carry N6-acetyllysine. The residue at position 106 (Q106) is an N5-methylglutamine. Position 130 is a phosphoserine (S130). Positions 130-131 match the [ST]-Q motif motif; that stretch reads SQ.

This sequence belongs to the histone H2A family. In terms of assembly, the nucleosome is a histone octamer containing two molecules each of H2A, H2B, H3 and H4 assembled in one H3-H4 heterotetramer and two H2A-H2B heterodimers. The octamer wraps approximately 147 bp of DNA. Post-translationally, phosphorylated to form H2AS128ph (gamma-H2A) in response to DNA double-strand breaks (DSBs) generated by exogenous genotoxic agents and by stalled replication forks. Phosphorylation is dependent on the DNA damage checkpoint kinases mec1/ATR and tel1/ATM, spreads on either side of a detected DSB site and may mark the surrounding chromatin for recruitment of proteins required for DNA damage signaling and repair. Gamma-H2A is removed from the DNA prior to the strand invasion-primer extension step of the repair process and subsequently dephosphorylated. Dephosphorylation is necessary for efficient recovery from the DNA damage checkpoint. Acetylated by esa1 to form H2AK4ac and H2AK7ac.

It localises to the nucleus. The protein resides in the chromosome. Its function is as follows. Core component of nucleosome which plays a central role in DNA double strand break (DSB) repair. Nucleosomes wrap and compact DNA into chromatin, limiting DNA accessibility to the cellular machineries which require DNA as a template. Histones thereby play a central role in transcription regulation, DNA repair, DNA replication and chromosomal stability. DNA accessibility is regulated via a complex set of post-translational modifications of histones, also called histone code, and nucleosome remodeling. The polypeptide is Histone H2A (hta1) (Aspergillus clavatus (strain ATCC 1007 / CBS 513.65 / DSM 816 / NCTC 3887 / NRRL 1 / QM 1276 / 107)).